A 143-amino-acid polypeptide reads, in one-letter code: Flagellar assembly factor FliW (143 aa).

This sequence belongs to the FliW family. Interacts with translational regulator CsrA and flagellin(s).

The protein resides in the cytoplasm. Its function is as follows. Acts as an anti-CsrA protein, binds CsrA and prevents it from repressing translation of its target genes, one of which is flagellin. Binds to flagellin and participates in the assembly of the flagellum. This Bacillus velezensis (strain DSM 23117 / BGSC 10A6 / LMG 26770 / FZB42) (Bacillus amyloliquefaciens subsp. plantarum) protein is Flagellar assembly factor FliW.